The following is a 103-amino-acid chain: Small ribosomal subunit protein uS17 (103 aa).

The interval 78–103 is disordered; sequence SHSPKADKSAGSTAPAPEAAAKEVSE.

The protein belongs to the universal ribosomal protein uS17 family. In terms of assembly, part of the 30S ribosomal subunit.

In terms of biological role, one of the primary rRNA binding proteins, it binds specifically to the 5'-end of 16S ribosomal RNA. This chain is Small ribosomal subunit protein uS17, found in Parasynechococcus marenigrum (strain WH8102).